A 175-amino-acid chain; its full sequence is Translation initiation factor IF-3 (175 aa).

This sequence belongs to the IF-3 family. As to quaternary structure, monomer.

It localises to the cytoplasm. In terms of biological role, IF-3 binds to the 30S ribosomal subunit and shifts the equilibrium between 70S ribosomes and their 50S and 30S subunits in favor of the free subunits, thus enhancing the availability of 30S subunits on which protein synthesis initiation begins. This Chromobacterium violaceum (strain ATCC 12472 / DSM 30191 / JCM 1249 / CCUG 213 / NBRC 12614 / NCIMB 9131 / NCTC 9757 / MK) protein is Translation initiation factor IF-3.